Reading from the N-terminus, the 318-residue chain is 3'-5' exoribonuclease YhaM (318 aa).

One can recognise an HD domain in the interval 163-279 (HVVSMLDLAK…LHYIDNLDAK (117 aa)).

This sequence belongs to the YhaM family.

Functionally, shows a 3'-5' exoribonuclease activity. The sequence is that of 3'-5' exoribonuclease YhaM from Bacillus cytotoxicus (strain DSM 22905 / CIP 110041 / 391-98 / NVH 391-98).